Consider the following 315-residue polypeptide: Probable cell division protein kinase ECU11_1290 (315 aa).

One can recognise a Protein kinase domain in the interval 13-294 (YEKVCRISSG…ASQGLCSGFV (282 aa)). ATP contacts are provided by residues 19–27 (ISSGSFGNV) and K42. Residue D138 is the Proton acceptor of the active site.

The protein belongs to the protein kinase superfamily. CMGC Ser/Thr protein kinase family. CDC2/CDKX subfamily.

The protein resides in the nucleus. The catalysed reaction is L-seryl-[protein] + ATP = O-phospho-L-seryl-[protein] + ADP + H(+). It catalyses the reaction L-threonyl-[protein] + ATP = O-phospho-L-threonyl-[protein] + ADP + H(+). Its function is as follows. May play a role in the control of the eukaryotic cell cycle. The protein is Probable cell division protein kinase ECU11_1290 of Encephalitozoon cuniculi (strain GB-M1) (Microsporidian parasite).